The primary structure comprises 327 residues: Thioredoxin reductase sirT (327 aa).

FAD-binding positions include 15 to 18, 37 to 42, H50, and A115; these read AGPA and DTGVFR. The cysteines at positions 139 and 142 are disulfide-linked. Residues D289 and 296-297 contribute to the FAD site; that span reads QV.

The protein belongs to the class-II pyridine nucleotide-disulfide oxidoreductase family. In terms of assembly, homodimer. Requires FAD as cofactor.

The protein operates within mycotoxin biosynthesis. Functionally, thioredoxin reductase; part of the gene cluster that mediates the biosynthesis of sirodesmin PL, an epipolythiodioxopiperazine (ETP) characterized by a disulfide bridged cyclic dipeptide and that acts as a phytotoxin which is involved in the blackleg didease of canola. SirD catalyzes the O-prenylation of L-tyrosine (L-Tyr) in the presence of dimethylallyl diphosphate (DMAPP) to yield 4-O-dimethylallyl-L-Tyr, and therefore represents probably the first pathway-specific enzyme in the biosynthesis of sirodesmin PL. 4-O-dimethylallyl-L-Tyr, then undergoes condensation with L-Ser in a reaction catalyzed by the non-ribosomal peptide synthase sirP to form the diketopiperazine (DKP) backbone. Further bishydroxylation of the DKP performed by the cytochrome P450 monooxygenase sirC leads to the production of the intermediate phomamide. This step is essential to form the reactive thiol group required for toxicity of sirodesmin PL. The next steps of sirodesmin biosynthesis are not well understood yet, but some predictions could be made from intermediate compounds identification. Phomamide is converted into phomalizarine via oxidation, probably by sirT. Further oxidation, methylation (by sirM or sirN) and reduction steps convert phomalizarine to deacetyl sirodesmin. Finally, acetyltransferase sirH probably acetylates deacetyl sirodesmin to produce sirodesmin PL. The protein is Thioredoxin reductase sirT of Leptosphaeria maculans (Blackleg fungus).